Consider the following 1401-residue polypeptide: DNA polymerase III PolC-type (1401 aa).

One can recognise an Exonuclease domain in the interval 388 to 543 (FVVFDIETTG…EDAKATAEIF (156 aa)).

The protein belongs to the DNA polymerase type-C family. PolC subfamily.

The protein resides in the cytoplasm. The enzyme catalyses DNA(n) + a 2'-deoxyribonucleoside 5'-triphosphate = DNA(n+1) + diphosphate. Its function is as follows. Required for replicative DNA synthesis. This DNA polymerase also exhibits 3' to 5' exonuclease activity. This is DNA polymerase III PolC-type from Caldanaerobacter subterraneus subsp. tengcongensis (strain DSM 15242 / JCM 11007 / NBRC 100824 / MB4) (Thermoanaerobacter tengcongensis).